A 261-amino-acid polypeptide reads, in one-letter code: UPF0246 protein Reut_A1014 (261 aa).

It belongs to the UPF0246 family.

In Cupriavidus pinatubonensis (strain JMP 134 / LMG 1197) (Cupriavidus necator (strain JMP 134)), this protein is UPF0246 protein Reut_A1014.